The following is a 53-amino-acid chain: UPF0391 membrane protein Acid_3618 (53 aa).

2 consecutive transmembrane segments (helical) span residues 6-26 (LVFLVFALIAAVLGFGGLAGA) and 28-48 (VGIAKILFFVFLVIWLVAFLM).

This sequence belongs to the UPF0391 family.

It is found in the cell membrane. The protein is UPF0391 membrane protein Acid_3618 of Solibacter usitatus (strain Ellin6076).